The primary structure comprises 104 residues: Large ribosomal subunit protein uL24 (104 aa).

Belongs to the universal ribosomal protein uL24 family. As to quaternary structure, part of the 50S ribosomal subunit.

In terms of biological role, one of two assembly initiator proteins, it binds directly to the 5'-end of the 23S rRNA, where it nucleates assembly of the 50S subunit. One of the proteins that surrounds the polypeptide exit tunnel on the outside of the subunit. The protein is Large ribosomal subunit protein uL24 of Caulobacter vibrioides (strain ATCC 19089 / CIP 103742 / CB 15) (Caulobacter crescentus).